The primary structure comprises 307 residues: tRNA dimethylallyltransferase (307 aa).

Residue 9–16 (GPTAIGKT) coordinates ATP. 11–16 (TAIGKT) is a binding site for substrate. 2 interaction with substrate tRNA regions span residues 34-37 (DSRQ) and 164-168 (QRMMR).

The protein belongs to the IPP transferase family. In terms of assembly, monomer. It depends on Mg(2+) as a cofactor.

It carries out the reaction adenosine(37) in tRNA + dimethylallyl diphosphate = N(6)-dimethylallyladenosine(37) in tRNA + diphosphate. In terms of biological role, catalyzes the transfer of a dimethylallyl group onto the adenine at position 37 in tRNAs that read codons beginning with uridine, leading to the formation of N6-(dimethylallyl)adenosine (i(6)A). The polypeptide is tRNA dimethylallyltransferase (Flavobacterium psychrophilum (strain ATCC 49511 / DSM 21280 / CIP 103535 / JIP02/86)).